The primary structure comprises 306 residues: Homoserine kinase (306 aa).

90 to 100 lines the ATP pocket; sequence PLARGLGSSAS.

This sequence belongs to the GHMP kinase family. Homoserine kinase subfamily.

The protein localises to the cytoplasm. It catalyses the reaction L-homoserine + ATP = O-phospho-L-homoserine + ADP + H(+). The protein operates within amino-acid biosynthesis; L-threonine biosynthesis; L-threonine from L-aspartate: step 4/5. Functionally, catalyzes the ATP-dependent phosphorylation of L-homoserine to L-homoserine phosphate. This chain is Homoserine kinase, found in Staphylococcus epidermidis (strain ATCC 12228 / FDA PCI 1200).